The chain runs to 407 residues: Ribosomal protein uL3-like (407 aa).

Basic residues predominate over residues 1–31; the sequence is MSHRKFSAPRHGHLGFLPHKRSHRHRGKVKT. Disordered stretches follow at residues 1–35 and 387–407; these read MSHR…WPRD and AFMG…SGDL.

The protein belongs to the universal ribosomal protein uL3 family. In terms of assembly, component of the large ribosomal subunit in striated muscle cells.

In terms of biological role, heart- and skeletal muscle-specific component of the ribosome, which regulates muscle function. Component of the large ribosomal subunit in striated muscle cells: replaces the RPL3 paralog in the ribosome in these cells. The ribosome is a large ribonucleoprotein complex responsible for the synthesis of proteins in the cell. Inhibits myotube growth and muscle function. The polypeptide is Ribosomal protein uL3-like (Homo sapiens (Human)).